Reading from the N-terminus, the 243-residue chain is 7-cyano-7-deazaguanine synthase (243 aa).

18–28 (FSGGQDSATCL) serves as a coordination point for ATP. Zn(2+)-binding residues include C206, C221, C224, and C227.

Belongs to the QueC family. It depends on Zn(2+) as a cofactor.

It carries out the reaction 7-carboxy-7-deazaguanine + NH4(+) + ATP = 7-cyano-7-deazaguanine + ADP + phosphate + H2O + H(+). Its pathway is purine metabolism; 7-cyano-7-deazaguanine biosynthesis. Catalyzes the ATP-dependent conversion of 7-carboxy-7-deazaguanine (CDG) to 7-cyano-7-deazaguanine (preQ(0)). In Methylorubrum extorquens (strain PA1) (Methylobacterium extorquens), this protein is 7-cyano-7-deazaguanine synthase.